Here is a 239-residue protein sequence, read N- to C-terminus: Large ribosomal subunit protein uL2 (239 aa).

2 disordered regions span residues 1 to 20 (MGKS…FRSP) and 203 to 239 (PFGG…GRRK). Positions 222-239 (PPGRKVGHIAARRTGRRK) are enriched in basic residues.

This sequence belongs to the universal ribosomal protein uL2 family. Part of the 50S ribosomal subunit. Forms a bridge to the 30S subunit in the 70S ribosome.

One of the primary rRNA binding proteins. Required for association of the 30S and 50S subunits to form the 70S ribosome, for tRNA binding and peptide bond formation. It has been suggested to have peptidyltransferase activity; this is somewhat controversial. Makes several contacts with the 16S rRNA in the 70S ribosome. The sequence is that of Large ribosomal subunit protein uL2 from Pyrococcus horikoshii (strain ATCC 700860 / DSM 12428 / JCM 9974 / NBRC 100139 / OT-3).